A 228-amino-acid chain; its full sequence is Dolichyl-phosphate hexose transferase HVO_1613 (228 aa).

This sequence belongs to the glycosyltransferase 2 family.

Functionally, glycosyltransferase that adds a monosaccharide to dolichol phosphate, thereby being responsible for generating one of the three monosaccharide-modified dolichol phosphates. The subunit onto which additional sugars are added is not known. The chain is Dolichyl-phosphate hexose transferase HVO_1613 from Haloferax volcanii (strain ATCC 29605 / DSM 3757 / JCM 8879 / NBRC 14742 / NCIMB 2012 / VKM B-1768 / DS2) (Halobacterium volcanii).